The sequence spans 634 residues: (-)-limonene synthase, chloroplastic (634 aa).

The N-terminal 21 residues, 1-21 (MSPVSAIPLAYKLCLPRSLIS), are a transit peptide targeting the chloroplast. (2E)-geranyl diphosphate is bound by residues R348, D385, D389, R526, and G529. Positions 385 and 389 each coordinate Mg(2+). Positions 385–389 (DDIYD) match the DDXXD motif motif. Positions 529 and 537 each coordinate Mg(2+).

The protein belongs to the terpene synthase family. Tpsb subfamily. Monomer. Requires Mg(2+) as cofactor. Mn(2+) is required as a cofactor.

Its subcellular location is the plastid. It localises to the chloroplast. The catalysed reaction is (2E)-geranyl diphosphate = (4S)-limonene + diphosphate. Its pathway is secondary metabolite biosynthesis; terpenoid biosynthesis. It functions in the pathway terpene metabolism; oleoresin biosynthesis. In terms of biological role, monoterpene synthase (mono-TPS) involved in the biosynthesis of monoterpene natural products. Catalyzes the conversion of (2E)-geranyl diphosphate (GPP) into (-)-limonene. Not able to use geranylgeranyl pyrophosphate (GGPP) and farnesyl pyrophosphate (FPP) as substrates. The sequence is that of (-)-limonene synthase, chloroplastic from Picea sitchensis (Sitka spruce).